The primary structure comprises 119 residues: Acidic phospholipase A2 DE-II (119 aa).

7 disulfides stabilise this stretch: Cys-11–Cys-72, Cys-26–Cys-118, Cys-28–Cys-44, Cys-43–Cys-99, Cys-50–Cys-92, Cys-60–Cys-85, and Cys-79–Cys-90. Ca(2+)-binding residues include Tyr-27, Gly-29, and Gly-31. Residue His-47 is part of the active site. Asp-48 lines the Ca(2+) pocket. Asp-93 is a catalytic residue.

This sequence belongs to the phospholipase A2 family. Group I subfamily. D49 sub-subfamily. Requires Ca(2+) as cofactor. As to expression, expressed by the venom gland.

The protein localises to the secreted. The catalysed reaction is a 1,2-diacyl-sn-glycero-3-phosphocholine + H2O = a 1-acyl-sn-glycero-3-phosphocholine + a fatty acid + H(+). In terms of biological role, PLA2 catalyzes the calcium-dependent hydrolysis of the 2-acyl groups in 3-sn-phosphoglycerides. The chain is Acidic phospholipase A2 DE-II from Naja melanoleuca (Forest cobra).